We begin with the raw amino-acid sequence, 446 residues long: Histidinol dehydrogenase homolog (446 aa).

H266 contributes to the Zn(2+) binding site. Active-site proton acceptor residues include E334 and H335. H427 contributes to the Zn(2+) binding site.

This sequence belongs to the histidinol dehydrogenase family. Zn(2+) serves as cofactor.

The sequence is that of Histidinol dehydrogenase homolog from Colwellia psychrerythraea (strain 34H / ATCC BAA-681) (Vibrio psychroerythus).